The sequence spans 122 residues: Large ribosomal subunit protein bL19 (122 aa).

The protein belongs to the bacterial ribosomal protein bL19 family.

Its function is as follows. This protein is located at the 30S-50S ribosomal subunit interface and may play a role in the structure and function of the aminoacyl-tRNA binding site. This chain is Large ribosomal subunit protein bL19, found in Prosthecochloris aestuarii (strain DSM 271 / SK 413).